The sequence spans 449 residues: UDP-N-acetylmuramoylalanine--D-glutamate ligase (449 aa).

118-124 lines the ATP pocket; that stretch reads GTNGKTT.

Belongs to the MurCDEF family.

Its subcellular location is the cytoplasm. It catalyses the reaction UDP-N-acetyl-alpha-D-muramoyl-L-alanine + D-glutamate + ATP = UDP-N-acetyl-alpha-D-muramoyl-L-alanyl-D-glutamate + ADP + phosphate + H(+). The protein operates within cell wall biogenesis; peptidoglycan biosynthesis. Its function is as follows. Cell wall formation. Catalyzes the addition of glutamate to the nucleotide precursor UDP-N-acetylmuramoyl-L-alanine (UMA). This is UDP-N-acetylmuramoylalanine--D-glutamate ligase from Staphylococcus saprophyticus subsp. saprophyticus (strain ATCC 15305 / DSM 20229 / NCIMB 8711 / NCTC 7292 / S-41).